Reading from the N-terminus, the 623-residue chain is Kelch repeat and BTB domain-containing protein 11 (623 aa).

The segment at 1-129 (MEHAVAPCVL…PEEPGEPAPV (129 aa)) is disordered. Low complexity predominate over residues 12 to 31 (PGTEPGAAGESESEGAASPA). The segment covering 42-55 (CFSSGEESPPQSLA) has biased composition (polar residues). Ser-64, Ser-67, Ser-87, and Ser-107 each carry phosphoserine. Positions 79–91 (EAGSAGAASPEEL) are enriched in low complexity. Positions 140–196 (PDLVLEVSGRRLRAHKAVLAARSDYFRARASRDVLRVQGVSLTALRLLLADAYSGRM) constitute a BTB domain. Kelch repeat units lie at residues 311 to 359 (RPQS…VLYN), 360 to 412 (YLFV…ALDG), 413 to 455 (HLYA…ATTC), and 458 to 500 (EIYV…ALDG).

This chain is Kelch repeat and BTB domain-containing protein 11 (KBTBD11), found in Homo sapiens (Human).